Here is a 172-residue protein sequence, read N- to C-terminus: uncharacterized protein (172 aa).

The N-acetyltransferase domain occupies 12–172 (IRLRCMEDRD…IAVYERKSYN (161 aa)).

This is an uncharacterized protein from Bacillus subtilis (strain 168).